We begin with the raw amino-acid sequence, 259 residues long: Putative zinc metalloprotease Rip2 (259 aa).

2 helical membrane passes run 14–34 (PIFLGLLGLTAVGGALAWLAG) and 39–59 (PLAYAGVFVMVIAGWLVSLCL). H60 lines the Zn(2+) pocket. E61 is a catalytic residue. H64 is a binding site for Zn(2+). Transmembrane regions (helical) follow at residues 97–117 (GLPMLFIALGGIGLPGAAVYV), 128–148 (TLVSLAGPTVNLALAMLLLAA), 156–176 (IHAVLWAGVAFLAFLQLTALV), and 211–231 (LVFLLVLFLAPTLNGWFFGVV).

Belongs to the peptidase M50B family. Requires Zn(2+) as cofactor.

It is found in the cell membrane. In Mycobacterium tuberculosis (strain ATCC 25618 / H37Rv), this protein is Putative zinc metalloprotease Rip2 (rip2).